Consider the following 216-residue polypeptide: Large ribosomal subunit protein uL3 (216 aa).

The protein belongs to the universal ribosomal protein uL3 family. Part of the 50S ribosomal subunit. Forms a cluster with proteins L14 and L19.

Functionally, one of the primary rRNA binding proteins, it binds directly near the 3'-end of the 23S rRNA, where it nucleates assembly of the 50S subunit. The chain is Large ribosomal subunit protein uL3 from Symbiobacterium thermophilum (strain DSM 24528 / JCM 14929 / IAM 14863 / T).